Here is a 171-residue protein sequence, read N- to C-terminus: NADH-quinone oxidoreductase subunit I 1 (171 aa).

2 4Fe-4S ferredoxin-type domains span residues 39-71 (IVLTRDPDGQERCVACNLCAAVCPVGCIDLSKA) and 81-110 (EHFRINFARCIFCGFCEEACPTAAIQLTPD). [4Fe-4S] cluster is bound by residues cysteine 51, cysteine 54, cysteine 57, cysteine 61, cysteine 90, cysteine 93, cysteine 96, and cysteine 100.

This sequence belongs to the complex I 23 kDa subunit family. NDH-1 is composed of 14 different subunits. Subunits NuoA, H, J, K, L, M, N constitute the membrane sector of the complex. The cofactor is [4Fe-4S] cluster.

It localises to the cell inner membrane. It catalyses the reaction a quinone + NADH + 5 H(+)(in) = a quinol + NAD(+) + 4 H(+)(out). In terms of biological role, NDH-1 shuttles electrons from NADH, via FMN and iron-sulfur (Fe-S) centers, to quinones in the respiratory chain. The immediate electron acceptor for the enzyme in this species is believed to be ubiquinone. Couples the redox reaction to proton translocation (for every two electrons transferred, four hydrogen ions are translocated across the cytoplasmic membrane), and thus conserves the redox energy in a proton gradient. The chain is NADH-quinone oxidoreductase subunit I 1 from Rhodopseudomonas palustris (strain HaA2).